The following is a 30-amino-acid chain: Cliotide T6 (30 aa).

Positions 1 to 30 (SIPCGESCVYIPCITTIVGCSCKDKVCYKN) form a cross-link, cyclopeptide (Ser-Asn). 3 disulfide bridges follow: C4/C20, C8/C22, and C13/C27.

In terms of processing, contains 3 disulfide bonds. Post-translationally, this is a cyclic peptide. Expressed in pod but not in flower, stem, shoot, leaf, seed, root and nodule (at protein level).

In terms of biological role, probably participates in a plant defense mechanism. This is Cliotide T6 from Clitoria ternatea (Butterfly pea).